A 233-amino-acid polypeptide reads, in one-letter code: MVDIVVTGLSANSVPYIEALERQRALHADVVAGRAQDTVILLEHPSVYTAGRRTEPEDRPRDGTPVIDVDRGGRITWHGPGQLVGYPIVRLPEPLDVVAHVRRLEDALIALLADLDVASYRVDGRSGVWIRGAAPDGSPRDEKVAAIGVRVAERVTMHGFALNCSNAFDAYDRIVPCGIRDAGVTSISRAIGRTVTPADVVPLLRPHLVRALSSNGSAMPATAPLSSVAGARA.

In terms of domain architecture, BPL/LPL catalytic spans 33–216 (GRAQDTVILL…HLVRALSSNG (184 aa)). Residues 71-78 (RGGRITWH), 146-148 (AIG), and 159-161 (GFA) each bind substrate. Cys177 serves as the catalytic Acyl-thioester intermediate.

This sequence belongs to the LipB family.

The protein localises to the cytoplasm. The enzyme catalyses octanoyl-[ACP] + L-lysyl-[protein] = N(6)-octanoyl-L-lysyl-[protein] + holo-[ACP] + H(+). It functions in the pathway protein modification; protein lipoylation via endogenous pathway; protein N(6)-(lipoyl)lysine from octanoyl-[acyl-carrier-protein]: step 1/2. Catalyzes the transfer of endogenously produced octanoic acid from octanoyl-acyl-carrier-protein onto the lipoyl domains of lipoate-dependent enzymes. Lipoyl-ACP can also act as a substrate although octanoyl-ACP is likely to be the physiological substrate. The sequence is that of Octanoyltransferase from Clavibacter michiganensis subsp. michiganensis (strain NCPPB 382).